We begin with the raw amino-acid sequence, 428 residues long: Enolase (428 aa).

Q163 provides a ligand contact to (2R)-2-phosphoglycerate. The active-site Proton donor is the E205. Mg(2+) contacts are provided by D242, E285, and D312. K337, R366, S367, and K388 together coordinate (2R)-2-phosphoglycerate. Catalysis depends on K337, which acts as the Proton acceptor.

The protein belongs to the enolase family. Mg(2+) is required as a cofactor.

It localises to the cytoplasm. The protein resides in the secreted. Its subcellular location is the cell surface. The enzyme catalyses (2R)-2-phosphoglycerate = phosphoenolpyruvate + H2O. It functions in the pathway carbohydrate degradation; glycolysis; pyruvate from D-glyceraldehyde 3-phosphate: step 4/5. Functionally, catalyzes the reversible conversion of 2-phosphoglycerate (2-PG) into phosphoenolpyruvate (PEP). It is essential for the degradation of carbohydrates via glycolysis. This is Enolase from Novosphingobium aromaticivorans (strain ATCC 700278 / DSM 12444 / CCUG 56034 / CIP 105152 / NBRC 16084 / F199).